The following is a 504-amino-acid chain: Protein anon-37Cs (504 aa).

Low levels seen in adult heads, thorax, abdomen and ovaries, high levels in testes.

It is found in the cytoplasm. In terms of biological role, has a non-vital function. In Drosophila melanogaster (Fruit fly), this protein is Protein anon-37Cs (anon-37Cs).